Consider the following 508-residue polypeptide: DNA-directed RNA polymerase subunit Rpo1C (508 aa).

The segment at 1–123 (MIIWKDTAKN…REKYEYEKKV (123 aa)) is unknown. Positions 124 to 508 (SSQVLDVIAE…IYKGYPKTKK (385 aa)) are DNA-directed RNA polymerase subunit Rpo1C.

It belongs to the RNA polymerase beta' chain family. Part of the RNA polymerase complex.

The protein localises to the cytoplasm. It catalyses the reaction RNA(n) + a ribonucleoside 5'-triphosphate = RNA(n+1) + diphosphate. In terms of biological role, DNA-dependent RNA polymerase (RNAP) catalyzes the transcription of DNA into RNA using the four ribonucleoside triphosphates as substrates. Forms part of the jaw domain. This Thermoplasma volcanium (strain ATCC 51530 / DSM 4299 / JCM 9571 / NBRC 15438 / GSS1) protein is DNA-directed RNA polymerase subunit Rpo1C.